Consider the following 173-residue polypeptide: Ribosome maturation factor RimM (173 aa).

The region spanning 95 to 169 (DPDEFYDHQL…VIEIDPPEGL (75 aa)) is the PRC barrel domain.

It belongs to the RimM family. As to quaternary structure, binds ribosomal protein uS19.

Its subcellular location is the cytoplasm. An accessory protein needed during the final step in the assembly of 30S ribosomal subunit, possibly for assembly of the head region. Essential for efficient processing of 16S rRNA. May be needed both before and after RbfA during the maturation of 16S rRNA. It has affinity for free ribosomal 30S subunits but not for 70S ribosomes. This Mycobacteroides abscessus (strain ATCC 19977 / DSM 44196 / CCUG 20993 / CIP 104536 / JCM 13569 / NCTC 13031 / TMC 1543 / L948) (Mycobacterium abscessus) protein is Ribosome maturation factor RimM.